A 491-amino-acid chain; its full sequence is MNNQDQALIFEMSREGRIGYSLPELDVPETELESLLPGDYIRDEDAKLPEVSELDIMRHYTALSKRNHGVDSGFYPLGSCTMKYNPKLNEKIARIAGFSAIHPLQDEDTVQGALELLYDLSGHLEEITGMDEVTLQPAAGAHGEWTGLMMIRAYHEARGDFGRTKVIVPDSAHGTNPASATVAGFETITVKSNEHGLVDIEDLKRAVNEETAALMLTNPNTLGLFEENITEMAEIVHQAGGKLYYDGANLNAVLSKARPGDMGFDVVHLNLHKTFTGPHGGGGPGSGPVGVKKEFIPYLPKPVLTKKEGRLTFDYDRPQSIGRVKPYYGNFGINVRAYTYIRSMGPDGLKAVTENAVLNANYMMRRLAPYYDLPYDRHCKHEFVLSGRRQKKLGVRTLDIAKRLLDFGYHPPTVYFPLNVEESIMIEPTETESKETLDAFIDAMIQIAREAEESPEIVQEAPHTTVVKRMDETKAARKPVLKYERTLDGSR.

N6-(pyridoxal phosphate)lysine is present on K273.

It belongs to the GcvP family. C-terminal subunit subfamily. The glycine cleavage system is composed of four proteins: P, T, L and H. In this organism, the P 'protein' is a heterodimer of two subunits. Pyridoxal 5'-phosphate is required as a cofactor.

It carries out the reaction N(6)-[(R)-lipoyl]-L-lysyl-[glycine-cleavage complex H protein] + glycine + H(+) = N(6)-[(R)-S(8)-aminomethyldihydrolipoyl]-L-lysyl-[glycine-cleavage complex H protein] + CO2. In terms of biological role, the glycine cleavage system catalyzes the degradation of glycine. The P protein binds the alpha-amino group of glycine through its pyridoxal phosphate cofactor; CO(2) is released and the remaining methylamine moiety is then transferred to the lipoamide cofactor of the H protein. The protein is Probable glycine dehydrogenase (decarboxylating) subunit 2 of Bacillus velezensis (strain DSM 23117 / BGSC 10A6 / LMG 26770 / FZB42) (Bacillus amyloliquefaciens subsp. plantarum).